A 562-amino-acid polypeptide reads, in one-letter code: Protein FAM83D-A (562 aa).

The interval 424–471 (ITTQTTETSQCTTQTPAPTSSVARLSNSSNSSSSSFSSTSITSTGSNC) is disordered. A compositionally biased stretch (low complexity) spans 425–471 (TTQTTETSQCTTQTPAPTSSVARLSNSSNSSSSSFSSTSITSTGSNC).

Belongs to the FAM83 family.

It localises to the cytoplasm. Its subcellular location is the cytoskeleton. The protein localises to the spindle. The protein resides in the spindle pole. Functionally, may regulate cell proliferation, growth, migration and epithelial to mesenchymal transition. May also be important for proper chromosome congression and alignment during mitosis. The polypeptide is Protein FAM83D-A (Xenopus laevis (African clawed frog)).